A 191-amino-acid polypeptide reads, in one-letter code: CASP-like protein 4C2 (191 aa).

Residues 1-29 are Cytoplasmic-facing; sequence MEAADSATNNSKDTHFYGKSRAENRRRSD. A helical membrane pass occupies residues 30-50; it reads AMLLLFRALTFSFSLAAVVVM. The Extracellular segment spans residues 51–72; that stretch reads GTNRYRINPQLKVSWYDFEPYR. Residues 73-93 form a helical membrane-spanning segment; sequence YVLAVNAIICIYSFVETWLAV. Residues 94-116 are Cytoplasmic-facing; it reads YTYLQGSYLLPEIFQVWFDYGHD. A helical membrane pass occupies residues 117-137; the sequence is QGFAYLLFSANSAGVAMAQLL. Over 138–161 the chain is Extracellular; sequence QSGNTLIHGAYHCTEAGGYCTQAR. Residues 162–182 traverse the membrane as a helical segment; it reads VSIALGFVAFLFLALSSLLTG. Topologically, residues 183–191 are cytoplasmic; sequence LRVARWYLR.

This sequence belongs to the Casparian strip membrane proteins (CASP) family. Homodimer and heterodimers.

Its subcellular location is the cell membrane. In Physcomitrium patens (Spreading-leaved earth moss), this protein is CASP-like protein 4C2.